Reading from the N-terminus, the 278-residue chain is Polyamine aminopropyltransferase (278 aa).

Residues 5 to 238 form the PABS domain; the sequence is ELWFTEQQTP…GLWSFTMGSK (234 aa). Position 34 (Gln-34) interacts with S-methyl-5'-thioadenosine. Residues His-65 and Asp-89 each contribute to the spermidine site. S-methyl-5'-thioadenosine-binding positions include Glu-109 and 140 to 141; that span reads DG. Asp-158 functions as the Proton acceptor in the catalytic mechanism. Residue 158-161 participates in spermidine binding; that stretch reads DSTD. Pro-165 is a binding site for S-methyl-5'-thioadenosine.

It belongs to the spermidine/spermine synthase family. Homodimer or homotetramer.

The protein localises to the cytoplasm. The catalysed reaction is S-adenosyl 3-(methylsulfanyl)propylamine + putrescine = S-methyl-5'-thioadenosine + spermidine + H(+). Its pathway is amine and polyamine biosynthesis; spermidine biosynthesis; spermidine from putrescine: step 1/1. Functionally, catalyzes the irreversible transfer of a propylamine group from the amino donor S-adenosylmethioninamine (decarboxy-AdoMet) to putrescine (1,4-diaminobutane) to yield spermidine. The chain is Polyamine aminopropyltransferase from Caldicellulosiruptor saccharolyticus (strain ATCC 43494 / DSM 8903 / Tp8T 6331).